The chain runs to 233 residues: U2 small nuclear ribonucleoprotein A' (233 aa).

4 LRR repeats span residues 20-40, 42-63, 65-86, and 89-110; these read KLTL…AITQ, KYQV…PKRF, NLQC…SFPS, and HITS…FKDK. One can recognise an LRRCT domain in the interval 122–160; that stretch reads NPITEMENYRYFIIWLIPSLKVLDFKKVKQAERKTSEDM.

Belongs to the U2 small nuclear ribonucleoprotein A family. As to quaternary structure, associated with the spliceosome.

It is found in the nucleus. Involved in pre-mRNA splicing. The protein is U2 small nuclear ribonucleoprotein A' (LEA1) of Candida albicans (strain SC5314 / ATCC MYA-2876) (Yeast).